Here is a 303-residue protein sequence, read N- to C-terminus: Lipoyl synthase (303 aa).

[4Fe-4S] cluster is bound by residues cysteine 40, cysteine 45, cysteine 51, cysteine 67, cysteine 71, cysteine 74, and serine 280. The Radical SAM core domain maps to 53–269 (AVRKTATFMI…KEIALSKGFS (217 aa)).

It belongs to the radical SAM superfamily. Lipoyl synthase family. [4Fe-4S] cluster is required as a cofactor.

It is found in the cytoplasm. The catalysed reaction is [[Fe-S] cluster scaffold protein carrying a second [4Fe-4S](2+) cluster] + N(6)-octanoyl-L-lysyl-[protein] + 2 oxidized [2Fe-2S]-[ferredoxin] + 2 S-adenosyl-L-methionine + 4 H(+) = [[Fe-S] cluster scaffold protein] + N(6)-[(R)-dihydrolipoyl]-L-lysyl-[protein] + 4 Fe(3+) + 2 hydrogen sulfide + 2 5'-deoxyadenosine + 2 L-methionine + 2 reduced [2Fe-2S]-[ferredoxin]. The protein operates within protein modification; protein lipoylation via endogenous pathway; protein N(6)-(lipoyl)lysine from octanoyl-[acyl-carrier-protein]. Its function is as follows. Catalyzes the radical-mediated insertion of two sulfur atoms into the C-6 and C-8 positions of the octanoyl moiety bound to the lipoyl domains of lipoate-dependent enzymes, thereby converting the octanoylated domains into lipoylated derivatives. The sequence is that of Lipoyl synthase from Halalkalibacterium halodurans (strain ATCC BAA-125 / DSM 18197 / FERM 7344 / JCM 9153 / C-125) (Bacillus halodurans).